Here is a 191-residue protein sequence, read N- to C-terminus: Glutathione-dependent formaldehyde-activating enzyme (191 aa).

The CENP-V/GFA domain maps to 22–169 (FAGGTLQCLC…LTELGLTPYD (148 aa)). Residues C29, C31, C50, C52, C55, C97, and C100 each coordinate Zn(2+).

Belongs to the Gfa family. Zn(2+) is required as a cofactor.

The enzyme catalyses S-(hydroxymethyl)glutathione = glutathione + formaldehyde. Its pathway is one-carbon metabolism; formaldehyde degradation; formate from formaldehyde (glutathione route): step 1/3. In terms of biological role, catalyzes the condensation of formaldehyde and glutathione to S-hydroxymethylglutathione. The polypeptide is Glutathione-dependent formaldehyde-activating enzyme (Xanthomonas campestris pv. campestris (strain 8004)).